We begin with the raw amino-acid sequence, 430 residues long: ETS domain-containing protein Elk-4 (430 aa).

A DNA-binding region (ETS) is located at residues 5 to 85 (ITLWQFLLQL…NGQKFVYKFV (81 aa)). Positions 116 to 127 (SKDVEYGGKERP) are enriched in basic and acidic residues. The tract at residues 116 to 138 (SKDVEYGGKERPPQPGAKTSSRN) is disordered. Lys-166 participates in a covalent cross-link: Glycyl lysine isopeptide (Lys-Gly) (interchain with G-Cter in SUMO2). Disordered stretches follow at residues 245–279 (TTFN…DIDT) and 292–325 (PENL…KGLE). Over residues 249–272 (PTPPVPSTPLPLKEPPRTPSPPLS) the composition is skewed to pro residues. Residues 299–312 (PKNEDSALPEKDKT) show a composition bias toward basic and acidic residues.

The protein belongs to the ETS family. As to quaternary structure, interacts with SIRT7. Lung and liver.

The protein localises to the nucleus. In terms of biological role, involved in both transcriptional activation and repression. Interaction with SIRT7 leads to recruitment and stabilization of SIRT7 at promoters, followed by deacetylation of histone H3 at 'Lys-18' (H3K18Ac) and subsequent transcription repression. Forms a ternary complex with the serum response factor (SRF). Requires DNA-bound SRF for ternary complex formation and makes extensive DNA contacts to the 5'side of SRF, but does not bind DNA autonomously. The sequence is that of ETS domain-containing protein Elk-4 (Elk4) from Mus musculus (Mouse).